Consider the following 156-residue polypeptide: Small ribosomal subunit protein uS7 (156 aa).

Belongs to the universal ribosomal protein uS7 family. Part of the 30S ribosomal subunit. Contacts proteins S9 and S11.

Functionally, one of the primary rRNA binding proteins, it binds directly to 16S rRNA where it nucleates assembly of the head domain of the 30S subunit. Is located at the subunit interface close to the decoding center, probably blocks exit of the E-site tRNA. The polypeptide is Small ribosomal subunit protein uS7 (Acinetobacter baumannii (strain AB307-0294)).